The sequence spans 400 residues: Large envelope protein (400 aa).

Met1 is modified (N-acetylmethionine). Residue Gly2 is the site of N-myristoyl glycine; by host attachment. The pre-S1 stretch occupies residues 2-119; that stretch reads GAPLSTARRG…PPLRDTHPQA (118 aa). The interval 2-174 is pre-S; sequence GAPLSTARRG…FSKTGDPAMN (173 aa). Topologically, residues 2 to 181 are virion surface; in external conformation; it reads GAPLSTARRG…AMNMENITSG (180 aa). Residues 2–253 lie on the Intravirion; in internal conformation side of the membrane; it reads GAPLSTARRG…PGYRWMCLRR (252 aa). N-linked (GlcNAc...) asparagine glycosylation occurs at Pro4. The tract at residues 70–115 is disordered; the sequence is PHGGLLGWSPQAQGILTTSPPDPPPASTNRRSGRKPTPVSPPLRDT. Polar residues predominate over residues 79 to 88; it reads PQAQGILTTS. Positions 120–174 are pre-S2; it reads MQWNSTQFHQALLDPRVRGLYLPAGGSSSETQNPVPTIASLTSSIFSKTGDPAMN. A helical membrane pass occupies residues 182–202; it reads LLGPLLVLQAVCFLLTKILTI. Residues 203–253 are Intravirion; in external conformation-facing; that stretch reads PQSLDSWWTSLNFLGVPPGCPGQNSQSPISNHLPTSCPPTCPGYRWMCLRR. The chain crosses the membrane as a helical span at residues 254 to 274; that stretch reads FIIFLFILLLCLIFLLVLLDY. The Virion surface portion of the chain corresponds to 275–348; the sequence is QGMLPVCPLL…WASARFSWLS (74 aa). Residue Asn320 is glycosylated (N-linked (GlcNAc...) asparagine; by host). The chain crosses the membrane as a helical span at residues 349 to 369; that stretch reads LLVQFVQWCVGLSPTVWLLVI. Residues 370-375 lie on the Intravirion side of the membrane; sequence WMIWYW. Residues 376–398 traverse the membrane as a helical segment; it reads GPNLCSILSPFIPLLPIFCYLWA. Residues 399-400 are Virion surface-facing; it reads SI.

Belongs to the orthohepadnavirus major surface antigen family. As to quaternary structure, in its internal form (Li-HBsAg), interacts with the capsid protein and with the isoform S. Interacts with host chaperone CANX. In terms of assembly, associates with host chaperone CANX through its pre-S2 N glycan; this association may be essential for isoform M proper secretion. Interacts with isoform L. Interacts with the antigens of satellite virus HDV (HDVAgs); this interaction is required for encapsidation of HDV genomic RNA. Isoform M is N-terminally acetylated by host at a ratio of 90%, and N-glycosylated by host at the pre-S2 region. Post-translationally, myristoylated.

It localises to the virion membrane. The large envelope protein exists in two topological conformations, one which is termed 'external' or Le-HBsAg and the other 'internal' or Li-HBsAg. In its external conformation the protein attaches the virus to cell receptors and thereby initiating infection. This interaction determines the species specificity and liver tropism. This attachment induces virion internalization predominantly through caveolin-mediated endocytosis. The large envelope protein also assures fusion between virion membrane and endosomal membrane. In its internal conformation the protein plays a role in virion morphogenesis and mediates the contact with the nucleocapsid like a matrix protein. Functionally, the middle envelope protein plays an important role in the budding of the virion. It is involved in the induction of budding in a nucleocapsid independent way. In this process the majority of envelope proteins bud to form subviral lipoprotein particles of 22 nm of diameter that do not contain a nucleocapsid. This Hepatitis B virus genotype H subtype adw4 (isolate Nicaragua/2928Nic/1997) (HBV-H) protein is Large envelope protein.